The chain runs to 772 residues: Nudix hydrolase 3 (772 aa).

The span at 1-14 shows a compositional bias: basic and acidic residues; it reads MAEEHFDVLTKSGE. The disordered stretch occupies residues 1–25; the sequence is MAEEHFDVLTKSGEKTGVSKPRGEV. In terms of domain architecture, Nudix hydrolase spans 30–172; that stretch reads DYHRAVHVWI…DPAYVPYDVN (143 aa). Positions 69–90 match the Nudix box motif; it reads GHISAGDTSLLSAQRELEEELG. Residues Glu-84 and Glu-88 each coordinate Mg(2+).

This sequence belongs to the Nudix hydrolase family. Mg(2+) serves as cofactor. Mn(2+) is required as a cofactor. Expressed in roots, stems and, at lower level, leaves.

Probably mediates the hydrolysis of some nucleoside diphosphate derivatives. The sequence is that of Nudix hydrolase 3 (NUDT3) from Arabidopsis thaliana (Mouse-ear cress).